An 883-amino-acid chain; its full sequence is Lysine-specific demethylase JMJ29 (883 aa).

Disordered stretches follow at residues 30–62 (KPFM…SAVK) and 161–204 (RTHS…SRKQ). Residues 34 to 43 (SKGSSPSSSS) show a composition bias toward low complexity. Composition is skewed to polar residues over residues 161–172 (RTHSLSANSPEN) and 184–204 (SPAS…SRKQ). The Zn(2+) site is built by C209, C212, C223, C226, C232, C235, C252, C255, C338, C341, C363, and H381. An RING-type; degenerate zinc finger spans residues 209–256 (CHQCLKGERITLLICSECEKTMFCLQCIRKWYPNLSEDDVVEKCPLCR). Residues 333–392 (DERVYCDHCATSIVDLHRSCPKCSYELCLKCCQEIREGSLSERPEMKFHYVDRGHRYMHG) form a B box-type; atypical zinc finger. Positions 632–863 (PRTGILNIAT…ECLRLTEEFR (232 aa)) constitute a JmjC domain. 2 residues coordinate Fe cation: H676 and D678. Residues 713–743 (NKVDKQSTEDCNEKEEEEEEELNMPEISSNE) form a disordered region. Acidic residues predominate over residues 722 to 735 (DCNEKEEEEEEELN). The Nuclear localization signal motif lies at 755 to 762 (FRREDVPK). H831 lines the Fe cation pocket.

Belongs to the JARID1 histone demethylase family. Fe(2+) is required as a cofactor. Expressed in inflorescences, roots, siliques, leaves and stems.

The protein localises to the nucleus. In terms of biological role, may function as histone H3 lysine demethylase and be involved in regulation of gene expression. This chain is Lysine-specific demethylase JMJ29, found in Arabidopsis thaliana (Mouse-ear cress).